The sequence spans 305 residues: Pseudouridine-5'-phosphate glycosidase (305 aa).

Glutamate 22 functions as the Proton donor in the catalytic mechanism. Positions 84 and 104 each coordinate substrate. Aspartate 136 provides a ligand contact to Mn(2+). 138–140 (SAD) serves as a coordination point for substrate. Lysine 157 acts as the Nucleophile in catalysis.

The protein belongs to the pseudouridine-5'-phosphate glycosidase family. In terms of assembly, homotrimer. Mn(2+) serves as cofactor.

It catalyses the reaction D-ribose 5-phosphate + uracil = psi-UMP + H2O. Catalyzes the reversible cleavage of pseudouridine 5'-phosphate (PsiMP) to ribose 5-phosphate and uracil. Functions biologically in the cleavage direction, as part of a pseudouridine degradation pathway. The polypeptide is Pseudouridine-5'-phosphate glycosidase (Chloroflexus aurantiacus (strain ATCC 29364 / DSM 637 / Y-400-fl)).